Here is a 642-residue protein sequence, read N- to C-terminus: Cysteine-rich receptor-like protein kinase 27 (642 aa).

The first 24 residues, 1-24 (MASTSIMLSSFFSFFFLTFFVTYA), serve as a signal peptide directing secretion. Over 25-274 (QQNVTVHTIC…QGKSKDRSKT (250 aa)) the chain is Extracellular. 7 N-linked (GlcNAc...) asparagine glycosylation sites follow: N27, N40, N44, N70, N145, N173, and N258. Gnk2-homologous domains follow at residues 29 to 130 (TVHT…SRII) and 136 to 240 (PVPF…VYPF). The chain crosses the membrane as a helical span at residues 275-295 (LIFAVVPIVAIILGLVFLFIY). Residues 296 to 642 (LKRRRKKKTL…DVSLTDLSAR (347 aa)) lie on the Cytoplasmic side of the membrane. The 288-residue stretch at 333–620 (FSLTNKIGEG…QLPKPSQPGF (288 aa)) folds into the Protein kinase domain. ATP is bound by residues 339 to 347 (IGEGGFGVV) and K361. Position 406 is a phosphotyrosine (Y406). The active-site Proton acceptor is the D458. S462 is subject to Phosphoserine. T498 bears the Phosphothreonine mark. Y506 bears the Phosphotyrosine mark.

The protein belongs to the protein kinase superfamily. Ser/Thr protein kinase family. CRK subfamily.

Its subcellular location is the membrane. It carries out the reaction L-seryl-[protein] + ATP = O-phospho-L-seryl-[protein] + ADP + H(+). It catalyses the reaction L-threonyl-[protein] + ATP = O-phospho-L-threonyl-[protein] + ADP + H(+). This Arabidopsis thaliana (Mouse-ear cress) protein is Cysteine-rich receptor-like protein kinase 27 (CRK27).